The chain runs to 176 residues: Protein KleF (176 aa).

The polypeptide is Protein KleF (kleF) (Escherichia coli).